Reading from the N-terminus, the 342-residue chain is tRNA N6-adenosine threonylcarbamoyltransferase (342 aa).

Fe cation-binding residues include H111 and H115. Substrate is bound by residues 134-138 (LVSGG), D167, G180, and N277. Residue D305 coordinates Fe cation.

It belongs to the KAE1 / TsaD family. Requires Fe(2+) as cofactor.

The protein resides in the cytoplasm. The enzyme catalyses L-threonylcarbamoyladenylate + adenosine(37) in tRNA = N(6)-L-threonylcarbamoyladenosine(37) in tRNA + AMP + H(+). Its function is as follows. Required for the formation of a threonylcarbamoyl group on adenosine at position 37 (t(6)A37) in tRNAs that read codons beginning with adenine. Is involved in the transfer of the threonylcarbamoyl moiety of threonylcarbamoyl-AMP (TC-AMP) to the N6 group of A37, together with TsaE and TsaB. TsaD likely plays a direct catalytic role in this reaction. This is tRNA N6-adenosine threonylcarbamoyltransferase from Histophilus somni (strain 2336) (Haemophilus somnus).